Consider the following 260-residue polypeptide: Indole-3-glycerol phosphate synthase (260 aa).

It belongs to the TrpC family.

It carries out the reaction 1-(2-carboxyphenylamino)-1-deoxy-D-ribulose 5-phosphate + H(+) = (1S,2R)-1-C-(indol-3-yl)glycerol 3-phosphate + CO2 + H2O. The protein operates within amino-acid biosynthesis; L-tryptophan biosynthesis; L-tryptophan from chorismate: step 4/5. The sequence is that of Indole-3-glycerol phosphate synthase from Thermoanaerobacter pseudethanolicus (strain ATCC 33223 / 39E) (Clostridium thermohydrosulfuricum).